A 162-amino-acid polypeptide reads, in one-letter code: Ribosomal RNA large subunit methyltransferase H (162 aa).

S-adenosyl-L-methionine-binding positions include Leu-78, Gly-109, and 128-133 (LSALTL).

The protein belongs to the RNA methyltransferase RlmH family. As to quaternary structure, homodimer.

Its subcellular location is the cytoplasm. It carries out the reaction pseudouridine(1915) in 23S rRNA + S-adenosyl-L-methionine = N(3)-methylpseudouridine(1915) in 23S rRNA + S-adenosyl-L-homocysteine + H(+). Functionally, specifically methylates the pseudouridine at position 1915 (m3Psi1915) in 23S rRNA. This is Ribosomal RNA large subunit methyltransferase H from Psychrobacter arcticus (strain DSM 17307 / VKM B-2377 / 273-4).